The following is a 375-amino-acid chain: Putative F-box only protein 11 (375 aa).

The 46-residue stretch at 1-46 folds into the F-box domain; sequence MVSVNLPWELVEEILCRVPPQSLVKFRTVCKQWNSLFDDNKFVNDH.

The chain is Putative F-box only protein 11 (FBX11) from Arabidopsis thaliana (Mouse-ear cress).